The chain runs to 93 residues: DNA-directed RNA polymerase subunit omega (93 aa).

It belongs to the RNA polymerase subunit omega family. As to quaternary structure, the RNAP catalytic core consists of 2 alpha, 1 beta, 1 beta' and 1 omega subunit. When a sigma factor is associated with the core the holoenzyme is formed, which can initiate transcription.

The catalysed reaction is RNA(n) + a ribonucleoside 5'-triphosphate = RNA(n+1) + diphosphate. In terms of biological role, promotes RNA polymerase assembly. Latches the N- and C-terminal regions of the beta' subunit thereby facilitating its interaction with the beta and alpha subunits. The sequence is that of DNA-directed RNA polymerase subunit omega from Actinobacillus pleuropneumoniae serotype 3 (strain JL03).